We begin with the raw amino-acid sequence, 321 residues long: Glycerol-3-phosphate phosphatase (321 aa).

The Nucleophile role is filled by Asp-34. Asp-34, Asp-36, and Asp-260 together coordinate Mg(2+). Asp-36 serves as the catalytic Proton donor.

The protein belongs to the HAD-like hydrolase superfamily. CbbY/CbbZ/Gph/YieH family. In terms of assembly, homodimer. Mg(2+) is required as a cofactor. Expression was confirmed in liver, adipose tissue, testis and pancreatic islet.

It catalyses the reaction O-phospho-L-tyrosyl-[protein] + H2O = L-tyrosyl-[protein] + phosphate. The enzyme catalyses sn-glycerol 1-phosphate + H2O = glycerol + phosphate. It carries out the reaction sn-glycerol 3-phosphate + H2O = glycerol + phosphate. Glycerol-3-phosphate phosphatase hydrolyzing glycerol-3-phosphate into glycerol. Thereby, regulates the cellular levels of glycerol-3-phosphate a metabolic intermediate of glucose, lipid and energy metabolism. Was also shown to have a 2-phosphoglycolate phosphatase activity and a tyrosine-protein phosphatase activity. However, their physiological relevance is unclear. In vitro, also has a phosphatase activity toward ADP, ATP, GDP and GTP. The sequence is that of Glycerol-3-phosphate phosphatase from Rattus norvegicus (Rat).